We begin with the raw amino-acid sequence, 341 residues long: Retinol dehydrogenase 10-B (341 aa).

The chain crosses the membrane as a helical; Signal-anchor span at residues 3–23 (IVLEFFLVTFRVLWAFVLAAA). 40–64 (LITGAGSGLGRLFALEFARRRAQLV) lines the NADP(+) pocket. Ser197 serves as a coordination point for substrate. The active-site Proton acceptor is the Tyr210.

It belongs to the short-chain dehydrogenases/reductases (SDR) family.

It is found in the microsome membrane. The protein localises to the endoplasmic reticulum membrane. The catalysed reaction is all-trans-retinol + NADP(+) = all-trans-retinal + NADPH + H(+). Its pathway is cofactor metabolism; retinol metabolism. In terms of biological role, retinol dehydrogenase with a clear preference for NADP. Converts all-trans-retinol to all-trans-retinal. Has no detectable activity towards 11-cis-retinol, 9-cis-retinol and 13-cis-retinol. This chain is Retinol dehydrogenase 10-B (rdh10-b), found in Xenopus laevis (African clawed frog).